We begin with the raw amino-acid sequence, 324 residues long: Probable UDP-sugar transporter protein SLC35A4 (324 aa).

Residues 1 to 18 (MSVEDGGVPGLARPRQAR) are Cytoplasmic-facing. Residues 19-39 (WTLLLFLSTAMYGAHAPFLAL) form a helical membrane-spanning segment. Topologically, residues 40–52 (CHVDGRVPFRPSS) are lumenal. A helical membrane pass occupies residues 53–73 (AVLLTELTKLLLCAFSLLVGW). Topologically, residues 74-85 (QTWPQGTPPWRQ) are cytoplasmic. The chain crosses the membrane as a helical span at residues 86 to 106 (AVPFALSALLYGANNNLVIYL). The Lumenal segment spans residues 107–142 (QRYMDPSTYQVLSNLKIGSTALLYCLCLGHRLSARQ). Residues 143–163 (GLALLLLMAAGACYASGGFQE) form a helical membrane-spanning segment. The Cytoplasmic portion of the chain corresponds to 164 to 180 (PVNTLPGPASAAGAHPM). The helical transmembrane segment at 181-201 (PLHITPLGLLLLILYCLISGL) threads the bilayer. Residues 202–214 (SSVYTELIMKRQR) lie on the Lumenal side of the membrane. The chain crosses the membrane as a helical span at residues 215 to 235 (LPLALQNLFLYTFGVILNFGL). Topologically, residues 236–248 (YAGSGPGPGFLEG) are cytoplasmic. A helical membrane pass occupies residues 249 to 271 (FSGWAVLVVLNQAVNGLLMSAVM). At 272–279 (KHGSSITR) the chain is on the lumenal side. Residues 280-300 (LFIVSCSLVVNAVLSAVLLQL) form a helical membrane-spanning segment. Topologically, residues 301–324 (QLTAIFFLAALLIGLAVCLYYGSP) are cytoplasmic.

The protein belongs to the nucleotide-sugar transporter family. SLC35A subfamily. As to quaternary structure, found in a complex with SLC35A2 and SLC35A3.

The protein localises to the golgi apparatus membrane. The catalysed reaction is CDP-L-ribitol(in) + CDP(out) = CDP-L-ribitol(out) + CDP(in). Functionally, mediates the transport of CDP-ribitol. Does not exhibit CMP-sialic acid, UDP-galactose and UDP-N-acetylglucosamine transport activity. The chain is Probable UDP-sugar transporter protein SLC35A4 from Mus musculus (Mouse).